The primary structure comprises 343 residues: Tetraacyldisaccharide 4'-kinase (343 aa).

58-65 (VAGGAGKT) provides a ligand contact to ATP.

The protein belongs to the LpxK family.

It catalyses the reaction a lipid A disaccharide + ATP = a lipid IVA + ADP + H(+). The protein operates within glycolipid biosynthesis; lipid IV(A) biosynthesis; lipid IV(A) from (3R)-3-hydroxytetradecanoyl-[acyl-carrier-protein] and UDP-N-acetyl-alpha-D-glucosamine: step 6/6. Transfers the gamma-phosphate of ATP to the 4'-position of a tetraacyldisaccharide 1-phosphate intermediate (termed DS-1-P) to form tetraacyldisaccharide 1,4'-bis-phosphate (lipid IVA). The protein is Tetraacyldisaccharide 4'-kinase of Polaromonas naphthalenivorans (strain CJ2).